Here is a 401-residue protein sequence, read N- to C-terminus: Chalcone synthase 6 (401 aa).

Cys168 is an active-site residue.

It belongs to the thiolase-like superfamily. Chalcone/stilbene synthases family.

It catalyses the reaction (E)-4-coumaroyl-CoA + 3 malonyl-CoA + 3 H(+) = 2',4,4',6'-tetrahydroxychalcone + 3 CO2 + 4 CoA. It participates in secondary metabolite biosynthesis; flavonoid biosynthesis. In terms of biological role, the primary product of this enzyme is 4,2',4',6'-tetrahydroxychalcone (also termed naringenin-chalcone or chalcone) which can under specific conditions spontaneously isomerize into naringenin. The protein is Chalcone synthase 6 (CHS6) of Sorghum bicolor (Sorghum).